Reading from the N-terminus, the 278-residue chain is Large ribosomal subunit protein uL2 (278 aa).

Disordered stretches follow at residues 1–20 (MGIR…SVSD), 25–58 (TRST…GGGH), and 223–278 (GVVM…GKKR). The span at 37 to 58 (LHGKGGRNAHGRITTRHKGGGH) shows a compositional bias: basic residues. Basic and acidic residues predominate over residues 253-268 (PEGRTRKPNKPSDKLI). The span at 269–278 (VRRRRTGKKR) shows a compositional bias: basic residues.

This sequence belongs to the universal ribosomal protein uL2 family. In terms of assembly, part of the 50S ribosomal subunit. Forms a bridge to the 30S subunit in the 70S ribosome.

One of the primary rRNA binding proteins. Required for association of the 30S and 50S subunits to form the 70S ribosome, for tRNA binding and peptide bond formation. It has been suggested to have peptidyltransferase activity; this is somewhat controversial. Makes several contacts with the 16S rRNA in the 70S ribosome. The polypeptide is Large ribosomal subunit protein uL2 (Mycolicibacterium smegmatis (strain ATCC 700084 / mc(2)155) (Mycobacterium smegmatis)).